The following is a 175-amino-acid chain: Adenine phosphoribosyltransferase (175 aa).

This sequence belongs to the purine/pyrimidine phosphoribosyltransferase family. As to quaternary structure, homodimer.

Its subcellular location is the cytoplasm. The enzyme catalyses AMP + diphosphate = 5-phospho-alpha-D-ribose 1-diphosphate + adenine. The protein operates within purine metabolism; AMP biosynthesis via salvage pathway; AMP from adenine: step 1/1. Its function is as follows. Catalyzes a salvage reaction resulting in the formation of AMP, that is energically less costly than de novo synthesis. This is Adenine phosphoribosyltransferase from Pelagibacter ubique (strain HTCC1062).